A 231-amino-acid chain; its full sequence is ATP-dependent dethiobiotin synthetase BioD 2 (231 aa).

13 to 18 is a binding site for ATP; it reads SVGKTV. T17 is a Mg(2+) binding site. Residue K38 is part of the active site. ATP contacts are provided by residues D55, 112-115, 172-173, 201-203, and Q208; these read EGTG, NR, and PYL. Residues D55 and E112 each coordinate Mg(2+).

It belongs to the dethiobiotin synthetase family. As to quaternary structure, homodimer. The cofactor is Mg(2+).

The protein localises to the cytoplasm. The enzyme catalyses (7R,8S)-7,8-diammoniononanoate + CO2 + ATP = (4R,5S)-dethiobiotin + ADP + phosphate + 3 H(+). It participates in cofactor biosynthesis; biotin biosynthesis; biotin from 7,8-diaminononanoate: step 1/2. In terms of biological role, catalyzes a mechanistically unusual reaction, the ATP-dependent insertion of CO2 between the N7 and N8 nitrogen atoms of 7,8-diaminopelargonic acid (DAPA, also called 7,8-diammoniononanoate) to form a ureido ring. This is ATP-dependent dethiobiotin synthetase BioD 2 from Salmonella typhimurium (strain LT2 / SGSC1412 / ATCC 700720).